The primary structure comprises 51 residues: Sperm protamine P1 (51 aa).

It belongs to the protamine P1 family. In terms of tissue distribution, testis.

It is found in the nucleus. It localises to the chromosome. Protamines substitute for histones in the chromatin of sperm during the haploid phase of spermatogenesis. They compact sperm DNA into a highly condensed, stable and inactive complex. The chain is Sperm protamine P1 (PRM1) from Piliocolobus badius (Western red colobus).